The sequence spans 73 residues: uncharacterized protein (73 aa).

N-glycosylated.

This is an uncharacterized protein from Saccharomyces cerevisiae (strain ATCC 204508 / S288c) (Baker's yeast).